Reading from the N-terminus, the 517-residue chain is Putative thymidine phosphorylase (517 aa).

It belongs to the thymidine/pyrimidine-nucleoside phosphorylase family. Type 2 subfamily.

The enzyme catalyses thymidine + phosphate = 2-deoxy-alpha-D-ribose 1-phosphate + thymine. In Legionella pneumophila subsp. pneumophila (strain Philadelphia 1 / ATCC 33152 / DSM 7513), this protein is Putative thymidine phosphorylase.